The following is a 222-amino-acid chain: MCGRFAQSQTREDYLALLAEDIERDIPYDPEPIGRYNVAPGTKVLLLSERDEHLHLDPVFWGYAPGWWDKPPLINARVETAATSRMFKPLWQHGRAICFADGWFEWKKEGDKKQPFFIYRADGQPIFMAAIGSTPFERGDEAEGFLIVTAAADQGLVDIHDRRPLVLSPEAAREWMRQEISGKEASEIAASGCVPANQFSWHPVSRAVGNVKNQGAELIQPV.

Residue Cys-2 is the Nucleophile of the active site. Cys-2 carries the thiazolidine linkage to a ring-opened DNA abasic site modification. Glu-105 is an active-site residue.

It belongs to the SOS response-associated peptidase family.

With respect to regulation, formation and reversal of DNA-protein cross-link depends on DNA context. Catalyzes formation of the thiazolidine linkage in presence of abasic sites in single-stranded DNA. Mediates the reversal of the thiazolidine cross-link in presence of double stranded DNA. Its function is as follows. Sensor of abasic sites in single-stranded DNA (ssDNA) required to preserve genome integrity by promoting error-free repair of abasic sites. Recognizes and binds abasic sites in ssDNA at replication forks and chemically modifies the lesion by forming a covalent cross-link with DNA: forms a stable thiazolidine linkage between a ring-opened abasic site and the alpha-amino and sulfhydryl substituents of its N-terminal catalytic cysteine residue. The DNA-protein cross-link is then reversed: able to catalyze the reversal of the thiazolidine cross-link and cycle between a cross-link and a non-cross-linked state depending on DNA context: mediates self-reversal of the thiazolidine cross-link in double stranded DNA. May act as a protease: mediates autocatalytic processing of its N-terminal methionine in order to expose the catalytic cysteine. The chain is Abasic site processing protein YedK from Escherichia coli (strain K12).